The sequence spans 410 residues: MKRGGLWLLLGLLVLSACSSNPPAASTQEAPLLGLEAPEAIPGRYIVVYKENADVLPALEALKAALEPGLMQPQGLQAQALRTLGLEGARVDKVYTAALRGVAVEVPDQELARLRQDPRVAYIEADQEVRAFAVQSPATWGLDRIDQRTLPLDGRYTYTATGAGVHAYVVDTGILLSHQEFTGRIGKGYDAITPGGSAQDCNGHGTHVAGTIGGTTYGVAKGVTLHPVRVLDCNGSGSNSSVIAGLDWVTQNHVKPAVINMSLGGGASTALDTAVMNAINAGVTVVVAAGNDNRDACFYSPARVTAAITVGATTSTDYRASFSNYGRCLDLFAPGQSITSAWYTSSTATNTISGTSMATPHVTGAAALYLQWYPTATPSQVASALLYYATPNVVKNAGRYSPNLLLYTPF.

The signal sequence occupies residues 1 to 19 (MKRGGLWLLLGLLVLSACS). A propeptide spanning residues 20-132 (SNPPAASTQE…IEADQEVRAF (113 aa)) is cleaved from the precursor. An Inhibitor I9 domain is found at 45–130 (YIVVYKENAD…AYIEADQEVR (86 aa)). Residues 139-410 (TWGLDRIDQR…SPNLLLYTPF (272 aa)) form the Peptidase S8 domain. Catalysis depends on charge relay system residues Asp171, His204, and Ser356.

The protein belongs to the peptidase S8 family. In terms of processing, contains 4 Cys residues that form two disulfide bonds. Glycosylated. This proteinase has a 0.7% carbohydrate content.

The protein resides in the secreted. In terms of biological role, serine proteinase with preferred activity for amino acids with aromatic side groups at the P1' side of the scissible bond. This Thermus sp. (strain Rt41A) protein is Extracellular serine proteinase.